The primary structure comprises 264 residues: tRNA pseudouridine synthase A (264 aa).

Aspartate 54 acts as the Nucleophile in catalysis. Tyrosine 113 is a binding site for substrate.

This sequence belongs to the tRNA pseudouridine synthase TruA family. In terms of assembly, homodimer.

It carries out the reaction uridine(38/39/40) in tRNA = pseudouridine(38/39/40) in tRNA. Its function is as follows. Formation of pseudouridine at positions 38, 39 and 40 in the anticodon stem and loop of transfer RNAs. In Leptospira biflexa serovar Patoc (strain Patoc 1 / Ames), this protein is tRNA pseudouridine synthase A.